We begin with the raw amino-acid sequence, 1512 residues long: Zinc finger protein 608 (1512 aa).

Disordered stretches follow at residues 1 to 23, 46 to 74, 89 to 237, 260 to 295, and 417 to 545; these read MSVN…YDSG, QKFE…SGAG, QASA…HLYG, VAAA…HRRI, and RFCE…FLDQ. Composition is skewed to low complexity over residues 51–74 and 151–185; these read NNST…SGAG and SALG…GSCG. Residues 201 to 218 are compositionally biased toward basic and acidic residues; the sequence is AKRDKDAGKSRKDKHDLL. The segment covering 220-230 has biased composition (polar residues); sequence GHQNGSGSQAP. A compositionally biased stretch (low complexity) spans 260-270; that stretch reads VAAAGEVSKSA. The stretch at 278-304 forms a coiled coil; that stretch reads NSMLVKKEEEEEESHRRIKKLKTEKVD. Lys-283 is covalently cross-linked (Glycyl lysine isopeptide (Lys-Gly) (interchain with G-Cter in SUMO2)). Phosphoserine is present on residues Ser-421 and Ser-424. Residues 449–458 are compositionally biased toward polar residues; that stretch reads ASFTESRGLQ. A Phosphothreonine modification is found at Thr-481. A Phosphoserine modification is found at Ser-493. Residues 526–535 show a composition bias toward polar residues; sequence NSRSTPTTPQ. The C2H2-type zinc finger occupies 553 to 578; the sequence is IDCPHPNCNKKYKHINGLRYHQAHAH. 3 disordered regions span residues 622–665, 713–750, and 777–858; these read LKAP…KKKG, DKEK…PQLI, and QATP…KDHL. Ser-627 is modified (phosphoserine). Positions 713–729 are enriched in basic and acidic residues; sequence DKEKGKKATNCKTDKNL. Residues 781–790 are compositionally biased toward pro residues; it reads KSPPLKPIQP. Ser-782 bears the Phosphoserine mark. The segment covering 818–858 has biased composition (basic and acidic residues); that stretch reads KLKDKEGKETGSPKMDAKLGKLEDSKGASKDLPGHFLKDHL. Lys-880 is covalently cross-linked (Glycyl lysine isopeptide (Lys-Gly) (interchain with G-Cter in SUMO2)). The residue at position 895 (Ser-895) is a Phosphoserine. Residues 925 to 934 show a composition bias toward polar residues; that stretch reads NGAESSAAKT. Disordered stretches follow at residues 925 to 996 and 1011 to 1066; these read NGAE…HSPY and PGQV…HQSV. Over residues 960–973 the composition is skewed to low complexity; that stretch reads SKASSPSDIISSKD. Ser-964 is modified (phosphoserine). Residues 979–989 show a composition bias toward polar residues; sequence HSSTTAQSSQL. Residues 1030–1054 show a composition bias toward basic and acidic residues; the sequence is IKKESEEDAEKKDKAEQLDSKKVDH. Over residues 1055 to 1066 the composition is skewed to polar residues; that stretch reads NSASLQPQHQSV. Position 1098 is a phosphoserine (Ser-1098). A disordered region spans residues 1117–1192; the sequence is QKMAQTGRGD…SQLLSNHQQQ (76 aa). A Glycyl lysine isopeptide (Lys-Gly) (interchain with G-Cter in SUMO2) cross-link involves residue Lys-1118. A compositionally biased stretch (basic and acidic residues) spans 1125–1145; the sequence is GDCERKSELPLKELGKEETKQ. A compositionally biased stretch (polar residues) spans 1146–1157; it reads KNMPSATISKAP. Residues Lys-1176 and Lys-1182 each participate in a glycyl lysine isopeptide (Lys-Gly) (interchain with G-Cter in SUMO2) cross-link. Residues 1183 to 1192 are compositionally biased toward low complexity; sequence SQLLSNHQQQ. Glycyl lysine isopeptide (Lys-Gly) (interchain with G-Cter in SUMO2) cross-links involve residues Lys-1199, Lys-1216, Lys-1234, and Lys-1250. A disordered region spans residues 1220–1335; it reads DSMKQTGVDP…RGTRVAVSSP (116 aa). The span at 1231–1241 shows a compositional bias: basic and acidic residues; the sequence is SRFKQDPDSRT. 2 stretches are compositionally biased toward basic and acidic residues: residues 1253 to 1276 and 1291 to 1327; these read DQQK…KTPN and IKEE…DSRG. Glycyl lysine isopeptide (Lys-Gly) (interchain with G-Cter in SUMO2) cross-links involve residues Lys-1292, Lys-1310, and Lys-1414. The segment at 1423-1459 is disordered; that stretch reads ANQYRSKSPAPVEKATAEREREAERERDRHSPFGQRH. Basic and acidic residues predominate over residues 1437–1453; that stretch reads ATAEREREAERERDRHS.

Transcription factor, which represses ZNF609 transcription. The polypeptide is Zinc finger protein 608 (ZNF608) (Homo sapiens (Human)).